A 290-amino-acid polypeptide reads, in one-letter code: Glycine--tRNA ligase alpha subunit (290 aa).

Belongs to the class-II aminoacyl-tRNA synthetase family. In terms of assembly, tetramer of two alpha and two beta subunits.

The protein resides in the cytoplasm. It catalyses the reaction tRNA(Gly) + glycine + ATP = glycyl-tRNA(Gly) + AMP + diphosphate. The chain is Glycine--tRNA ligase alpha subunit from Zymomonas mobilis subsp. mobilis (strain ATCC 31821 / ZM4 / CP4).